We begin with the raw amino-acid sequence, 566 residues long: Glucose-6-phosphate isomerase, cytosolic (566 aa).

Residue glutamate 360 is the Proton donor of the active site. Active-site residues include histidine 391 and lysine 516.

Belongs to the GPI family. In terms of assembly, homodimer.

It is found in the cytoplasm. It catalyses the reaction alpha-D-glucose 6-phosphate = beta-D-fructose 6-phosphate. It functions in the pathway carbohydrate degradation; glycolysis; D-glyceraldehyde 3-phosphate and glycerone phosphate from D-glucose: step 2/4. This is Glucose-6-phosphate isomerase, cytosolic (PGIC) from Spinacia oleracea (Spinach).